Reading from the N-terminus, the 789-residue chain is Ribonucleoside-diphosphate reductase large subunit (789 aa).

Substrate-binding positions include Thr207, Ser222–Cys223, Gly253, Asn435–Glu439, and Pro620–Ser624. Residues Cys223 and Cys452 are joined by a disulfide bond. Residue Asn435 is the Proton acceptor of the active site. Catalysis depends on Cys437, which acts as the Cysteine radical intermediate. Catalysis depends on Glu439, which acts as the Proton acceptor.

Belongs to the ribonucleoside diphosphate reductase large chain family. In terms of assembly, heterotetramer composed of a homodimer of the large subunit (R1) and a homodimer of the small subunit (R2). Larger multisubunit protein complex are also active, composed of (R1)n(R2)n.

The catalysed reaction is a 2'-deoxyribonucleoside 5'-diphosphate + [thioredoxin]-disulfide + H2O = a ribonucleoside 5'-diphosphate + [thioredoxin]-dithiol. Functionally, ribonucleoside-diphosphate reductase holoenzyme provides the precursors necessary for viral DNA synthesis. Allows virus growth in non-dividing cells, as well as reactivation from latency in infected hosts. Catalyzes the biosynthesis of deoxyribonucleotides from the corresponding ribonucleotides. The polypeptide is Ribonucleoside-diphosphate reductase large subunit (Equus caballus (Horse)).